Reading from the N-terminus, the 587-residue chain is Large T antigen (587 aa).

Positions 6–82 constitute a J domain; the sequence is RLTELLCLPV…PEESGYATFE (77 aa). The segment at 58–78 is disordered; it reads EGLRADETLEDSDPEPEESGY. Residues 65-75 show a composition bias toward acidic residues; sequence TLEDSDPEPEE. The T-ag OBD DNA-binding region spans 102–219; sequence CMQTYFSVNE…EECSIDMNVV (118 aa). Residues 221-319 form a T-ag D1-type zinc finger; it reads EKQFMHAMLY…KRFRSATMTR (99 aa). The Zn(2+) site is built by C258, C261, H275, and H279. An SF3 helicase domain is found at 360 to 520; it reads PDVDVIVDIL…KVYAKALRNN (161 aa). 386–393 lines the ATP pocket; it reads GPVNTGKT.

As to quaternary structure, forms homohexamers in the presence of ATP. Interacts with host HDAC1. Interacts (via LXCXE domain) with host RB1; the interaction induces the aberrant dissociation of RB1-E2F1 complex thereby disrupting RB1's activity. Interacts (via LXCXE domain) with host pRB-related proteins RBL1 and RBL2. Interacts (via C-terminus) with host TOP1 and POLA1 allowing DNA replication. Interacts with host TP53, inhibiting TP53 binding to DNA. Interacts with host preinitiation complex components TBP, TFIIA and TFIID to regulate transcription initiation. The cofactor is Mg(2+). Post-translationally, phosphorylated on both serine and threonine residues. Small t antigen inhibits the dephosphorylation by the AC form of PP2A. O-Glycosylated near the C-terminal region. In terms of processing, acetylated by CBP in a TP53-dependent manner.

It is found in the host nucleus. The enzyme catalyses Couples ATP hydrolysis with the unwinding of duplex DNA by translocating in the 3'-5' direction.. It carries out the reaction ATP + H2O = ADP + phosphate + H(+). Its function is as follows. Isoform large T antigen is a key early protein essential for both driving viral replication and inducing cellular transformation. Plays a role in viral genome replication by driving entry of quiescent cells into the cell cycle and by autoregulating the synthesis of viral early mRNA. Displays highly oncogenic activities by corrupting the host cellular checkpoint mechanisms that guard cell division and the transcription, replication, and repair of DNA. Participates in the modulation of cellular gene expression preceeding viral DNA replication. This step involves binding to host key cell cycle regulators retinoblastoma protein RB1/pRb and TP53. Induces the disassembly of host E2F1 transcription factors from RB1, thus promoting transcriptional activation of E2F1-regulated S-phase genes. Inhibits host TP53 binding to DNA, abrogating the ability of TP53 to stimulate gene expression. Plays the role of a TFIID-associated factor (TAF) in transcription initiation for all three RNA polymerases, by stabilizing the TBP-TFIIA complex on promoters. Initiates viral DNA replication and unwinding via interactions with the viral origin of replication. Binds two adjacent sites in the SV40 origin. The replication fork movement is facilitated by Large T antigen helicase activity. Has processive 3'-5' DNA helicase activity which requires a short 3' single-stranded region and ATP. Activates the transcription of viral late mRNA, through host TBP and TFIIA stabilization. Interferes with histone deacetylation mediated by HDAC1, leading to activation of transcription. The chain is Large T antigen from Budgerigar fledgling disease virus (BFPyV).